The sequence spans 304 residues: Glycine--tRNA ligase alpha subunit (304 aa).

The protein belongs to the class-II aminoacyl-tRNA synthetase family. Tetramer of two alpha and two beta subunits.

Its subcellular location is the cytoplasm. It catalyses the reaction tRNA(Gly) + glycine + ATP = glycyl-tRNA(Gly) + AMP + diphosphate. The polypeptide is Glycine--tRNA ligase alpha subunit (Actinobacillus pleuropneumoniae serotype 3 (strain JL03)).